A 1036-amino-acid polypeptide reads, in one-letter code: Putative GPI-anchored protein pfl2 (1036 aa).

The N-terminal stretch at 1 to 23 (MKFFTASTLFLLAAQSLNSGVSA) is a signal peptide. N66, N97, N165, N201, N233, N259, N277, N296, N312, N331, N347, N363, N379, N395, N410, N429, N445, N461, N477, N493, N509, N524, N543, N559, and N573 each carry an N-linked (GlcNAc...) asparagine glycan. 2 disordered regions span residues 88–130 (SSSL…SSLA) and 147–183 (SSLA…SLSS). Residues 243 to 585 (SSISSTVSSS…ITSSASGSTG (343 aa)) are compositionally biased toward low complexity. The segment at 243–710 (SSISSTVSSS…PLSNSTVAPT (468 aa)) is disordered. Positions 586–595 (EFTNTNSGNG) are enriched in polar residues. Over residues 597-630 (VSGSVTTPTSTPLSNSTVAPTSTFTSSGFNTTSG) the composition is skewed to low complexity. 9 N-linked (GlcNAc...) asparagine glycosylation sites follow: N611, N626, N642, N657, N673, N688, N704, N719, and N735. Residues 631–647 (LPTSSASTPLSNSTVAP) are compositionally biased toward polar residues. The span at 648 to 692 (TSTFTSSGFNTTSGLPTSSASTPSSNSSIVPTSTFTSSGFNTTSG) shows a compositional bias: low complexity. Positions 693-709 (LPTSSASTPLSNSTVAP) are enriched in polar residues. Low complexity-rich tracts occupy residues 722 to 831 (SGLP…TTAS), 838 to 862 (PTAA…ATYT), and 885 to 906 (IPVN…SFTP). Disordered stretches follow at residues 722–862 (SGLP…ATYT) and 885–918 (IPVN…SYSN). N918, N924, N930, N933, N939, N947, and N977 each carry an N-linked (GlcNAc...) asparagine glycan. Positions 978–1011 (TTATSGSDDDVKTASTSSSTSYTSSSSSSSSTTS) are disordered. Positions 990-1011 (TASTSSSTSYTSSSSSSSSTTS) are enriched in low complexity. The GPI-anchor amidated serine moiety is linked to residue S1011. Residues 1012–1036 (AASSKASVSMGLNGLMIAAVILLVA) constitute a propeptide, removed in mature form.

Its subcellular location is the cell membrane. Functionally, may be involved in agglutination during conjugation or other aspects of colony formation. Induces flocculation when overexpressed. The protein is Putative GPI-anchored protein pfl2 of Schizosaccharomyces pombe (strain 972 / ATCC 24843) (Fission yeast).